The chain runs to 21 residues: thr operon leader peptide (21 aa).

The protein belongs to the thr operon leader peptide family.

Its function is as follows. This protein is involved in control of the biosynthesis of threonine. In Shigella boydii serotype 18 (strain CDC 3083-94 / BS512), this protein is thr operon leader peptide.